The primary structure comprises 799 residues: Protein-lysine N-methyltransferase SMYD4 (799 aa).

112-114 (RSA) contacts S-adenosyl-L-methionine. The SET domain occupies 233–570 (LSVSLCTHPL…KGQEILHCYG (338 aa)). Residues cysteine 296, cysteine 299, cysteine 309, cysteine 312, cysteine 318, cysteine 322, histidine 331, and cysteine 335 each contribute to the Zn(2+) site. The MYND-type zinc finger occupies 296–335 (CHRCLKHTLATVPCGSCSYAKYCSQECMQQAWDLYHSTEC). Residues 535–536 (NH), tyrosine 569, and phenylalanine 591 contribute to the S-adenosyl-L-methionine site.

Belongs to the class V-like SAM-binding methyltransferase superfamily. As to quaternary structure, interacts (via MYND-type zinc finger) with HDAC1.

Its subcellular location is the nucleus. The protein resides in the cytoplasm. The enzyme catalyses L-lysyl-[protein] + S-adenosyl-L-methionine = N(6)-methyl-L-lysyl-[protein] + S-adenosyl-L-homocysteine + H(+). Functionally, protein-lysine N-methyltransferase. Monomethylates PRMT5, modulating its transcriptional activity. May also act as a histone methyltransferase. Plays a critical role in cardiac development. Acts as a key epigenetic regulator of gene expression during cardiac development via its dual activities as a methyltransferase and negative regulator of HDAC1. The polypeptide is Protein-lysine N-methyltransferase SMYD4 (Smyd4) (Mus musculus (Mouse)).